The chain runs to 434 residues: Putative DD-carboxypeptidase TP_0574 (434 aa).

The N-terminal stretch at M1–G19 is a signal peptide. Residue C20 is the site of N-palmitoyl cysteine attachment. A lipid anchor (S-diacylglycerol cysteine) is attached at C20.

In terms of assembly, probably a monomer; a non-lipidated construct (residues 22-434) is monomeric in solution but crystallizes as a homodimer. Zn(2+) is required as a cofactor. In terms of processing, the N-terminus is blocked. Present as a doublet of low abundance 48 kDa and high abundance 47 kDa proteins. The longer form is probably due to readthrough of the stop codon; the extra amino acids at the C-terminus would be X-Lys-Arg-Gly-Val-Leu-Ser-Arg-Val-Ser, a peptide antibody against this sequence detects only the 48 kDa form.

It is found in the cell inner membrane. A possible D,D-carboxypeptidase, that releases amino acids sequentially from a proteins C-terminus. Has zinc-dependent carboxypeptidase activity on synthetic depsipeptide substrates. May serve to decrease cross-linking of peptidoglycan, promoting the highly sinusous motility of this spirochaete. Overexpression of the whole protein in E.coli leads to aberrant cell morphology and extrusion of the cytoplasm, while overexpression of a construct with the first 62 resides of the protein fused to PhoA does have this effect, suggesting the whole protein, not the lipoprotein moiety, is toxic. Binds penicillin. Penicillin binding is covalent, does not require lipidation, and is zinc-dependent. While this protein has beta-lactamase activity in vitro, that is probably not its role in vivo, as T.pallidum is very sensitive to penicillin antibiotics. In terms of biological role, a pathogen-specific membrane antigen. Most abundant of the membrane lipoproteins, only found in pathogenic treponemes, suggesting that it is an important structural moiety in the cell envelope of virulent treponemal subspecies. A lipopeptide corresponding to the first 6 mature residues induces host (human and mouse) cytokine release by monocyte cell lines via TLR2 and CD14; nonlipidated protein does not stimulate host cells. Stimulates host (human) dendritic cell maturation to become MHC class II-positive antigen presenting cells via TLR2, which depends on lipidation; nonlipidated protein does not stimulate maturation. This is Putative DD-carboxypeptidase TP_0574 from Treponema pallidum (strain Nichols).